Here is a 61-residue protein sequence, read N- to C-terminus: Small ribosomal subunit protein uS14 (61 aa).

Zn(2+) is bound by residues cysteine 24, cysteine 27, cysteine 40, and cysteine 43.

It belongs to the universal ribosomal protein uS14 family. Zinc-binding uS14 subfamily. Part of the 30S ribosomal subunit. Contacts proteins S3 and S10. Zn(2+) is required as a cofactor.

Functionally, binds 16S rRNA, required for the assembly of 30S particles and may also be responsible for determining the conformation of the 16S rRNA at the A site. The polypeptide is Small ribosomal subunit protein uS14 (Geobacter metallireducens (strain ATCC 53774 / DSM 7210 / GS-15)).